Reading from the N-terminus, the 260-residue chain is MMMHSSACDCEASLCETLRGFSAKHPDSVIYQTSLMSALLSGVYEGDTTIADLLAHGDFGLGTFNELDGEMIAFSSQVYQLRADGSARAAKPEQKTPFAVMTWFQPQYRKTFDAPVSRQQIHDVIDQQIPSDNLFCALRIDGNFRHAHTRTVPRQTPPYRAMTDVLDDQPVFRFNQREGVLVGFRTPQHMQGINVAGYHEHFITDDRQGGGHLLDYQLESGVLTFGEIHKLMIDLPADSAFLQANLHPSNLDAAIRSVEN.

It belongs to the alpha-acetolactate decarboxylase family.

It carries out the reaction (2S)-2-acetolactate + H(+) = (R)-acetoin + CO2. Its pathway is polyol metabolism; (R,R)-butane-2,3-diol biosynthesis; (R,R)-butane-2,3-diol from pyruvate: step 2/3. Functionally, converts acetolactate into acetoin, which can be excreted by the cells. This may be a mechanism for controlling the internal pH of cells in the stationary stage. In Klebsiella aerogenes (Enterobacter aerogenes), this protein is Alpha-acetolactate decarboxylase (budA).